Reading from the N-terminus, the 381-residue chain is Cytochrome b (381 aa).

4 helical membrane passes run 34 to 54 (FGSL…FLAM), 78 to 99 (WLIR…YLHI), 114 to 134 (WNIG…GYVL), and 179 to 199 (FFAF…IHLL). Residues H84 and H98 each coordinate heme b. Heme b contacts are provided by H183 and H197. Position 202 (H202) interacts with a ubiquinone. The next 4 helical transmembrane spans lie at 227-247 (YKDI…TLFI), 289-309 (LGGV…PLLQ), 321-341 (MTQI…WIGG), and 348-368 (FIMV…IIIP).

It belongs to the cytochrome b family. In terms of assembly, the cytochrome bc1 complex contains 3 respiratory subunits (MT-CYB, CYC1 and UQCRFS1), 2 core proteins (UQCRC1 and UQCRC2) and probably 6 low-molecular weight proteins. Requires heme b as cofactor.

It is found in the mitochondrion inner membrane. In terms of biological role, component of the ubiquinol-cytochrome c reductase complex (complex III or cytochrome b-c1 complex) that is part of the mitochondrial respiratory chain. The b-c1 complex mediates electron transfer from ubiquinol to cytochrome c. Contributes to the generation of a proton gradient across the mitochondrial membrane that is then used for ATP synthesis. The polypeptide is Cytochrome b (mt-cyb) (Galeocerdo cuvier (Tiger shark)).